We begin with the raw amino-acid sequence, 147 residues long: Large ribosomal subunit protein uL15 (147 aa).

Residues 1 to 28 (MIRRRKKVRKLRGSHTHGWGCKKKHRGG) are compositionally biased toward basic residues. Residues 1–43 (MIRRRKKVRKLRGSHTHGWGCKKKHRGGGSKGGRGMAGTGKRN) form a disordered region. A compositionally biased stretch (gly residues) spans 29-38 (GSKGGRGMAG).

It belongs to the universal ribosomal protein uL15 family. Part of the 50S ribosomal subunit.

Its function is as follows. Binds to the 23S rRNA. The sequence is that of Large ribosomal subunit protein uL15 from Pyrococcus horikoshii (strain ATCC 700860 / DSM 12428 / JCM 9974 / NBRC 100139 / OT-3).